Reading from the N-terminus, the 266-residue chain is MDVILMLNKRELAYWCVVNDRKLYLLDNAIPLLEKSELTFNTDSARVIGEYLDHPVYWLEANNCLHSDDFYTQRELLGIDQALFDLAGRATQLSHMLHTQSFCSVCGGAAVLADDQFAMVCQQCSNAQYPRVSPCIIVAVRKEDQILLAQHPRHKTGIYTVIAGFVEAGETLEQCVAREVEEETGIQVKNIRYFSSQPWAFPSNIMMAFLADYESGEINPDYEELSDAIWAKAAELPAIAPKGTIARVLIDETLALIKATKHVQNL.

Arg-74 is a substrate binding site. The Zn(2+) site is built by Cys-103, Cys-106, Cys-121, and Cys-124. Tyr-129 contacts substrate. One can recognise a Nudix hydrolase domain in the interval 130–253; it reads PRVSPCIIVA…TIARVLIDET (124 aa). A divalent metal cation contacts are provided by Ala-163, Glu-179, and Glu-183. The Nudix box motif lies at 164-185; the sequence is GFVEAGETLEQCVAREVEEETG. Position 197-204 (197-204) interacts with substrate; it reads QPWAFPSN. Glu-224 provides a ligand contact to a divalent metal cation. Residue Ala-246 coordinates substrate.

The protein belongs to the Nudix hydrolase family. NudC subfamily. Homodimer. Mg(2+) serves as cofactor. Requires Mn(2+) as cofactor. It depends on Zn(2+) as a cofactor.

It carries out the reaction a 5'-end NAD(+)-phospho-ribonucleoside in mRNA + H2O = a 5'-end phospho-adenosine-phospho-ribonucleoside in mRNA + beta-nicotinamide D-ribonucleotide + 2 H(+). The enzyme catalyses NAD(+) + H2O = beta-nicotinamide D-ribonucleotide + AMP + 2 H(+). It catalyses the reaction NADH + H2O = reduced beta-nicotinamide D-ribonucleotide + AMP + 2 H(+). Its function is as follows. mRNA decapping enzyme that specifically removes the nicotinamide adenine dinucleotide (NAD) cap from a subset of mRNAs by hydrolyzing the diphosphate linkage to produce nicotinamide mononucleotide (NMN) and 5' monophosphate mRNA. The NAD-cap is present at the 5'-end of some mRNAs and stabilizes RNA against 5'-processing. Has preference for mRNAs with a 5'-end purine. Catalyzes the hydrolysis of a broad range of dinucleotide pyrophosphates. In Photobacterium profundum (strain SS9), this protein is NAD-capped RNA hydrolase NudC.